Reading from the N-terminus, the 502-residue chain is Activin receptor type-1-like (502 aa).

The N-terminal stretch at 1–22 is a signal peptide; it reads MTLGSFRRGLLMLSVAFGLTRG. The Extracellular portion of the chain corresponds to 23–119; that stretch reads DLAKPSKLVN…EEPEVDAHLP (97 aa). Residue N32 is glycosylated (N-linked (GlcNAc...) asparagine). 3 disulfide bridges follow: C33/C50, C35/C40, and C45/C68. Residues 72–75 form a mediates specificity for BMP ligand region; it reads NQEL. Cystine bridges form between C76-C88 and C89-C94. N97 carries N-linked (GlcNAc...) asparagine glycosylation. Residues 120–140 traverse the membrane as a helical segment; the sequence is LILGPVLALPVLVALGALGLW. Over 141–502 the chain is Cytoplasmic; it reads RVRRRQEKQR…HNPEKPKVIH (362 aa). Phosphoserine occurs at positions 154, 159, and 160. The GS domain occupies 171–200; that stretch reads SMLGDFLDSDCTTGSGSGLPFLVQRTVARQ. Residues 201-502 enclose the Protein kinase domain; the sequence is VALVECVGKG…HNPEKPKVIH (302 aa). Residues 207 to 215 and K228 contribute to the ATP site; that span reads VGKGRYGEV. D329 serves as the catalytic Proton acceptor.

This sequence belongs to the protein kinase superfamily. TKL Ser/Thr protein kinase family. TGFB receptor subfamily. Interacts with TSC22D1/TSC-22. Mg(2+) is required as a cofactor. The cofactor is Mn(2+).

Its subcellular location is the cell membrane. It catalyses the reaction L-threonyl-[receptor-protein] + ATP = O-phospho-L-threonyl-[receptor-protein] + ADP + H(+). It carries out the reaction L-seryl-[receptor-protein] + ATP = O-phospho-L-seryl-[receptor-protein] + ADP + H(+). Functionally, type I receptor for TGF-beta family ligands BMP9/GDF2 and BMP10 and important regulator of normal blood vessel development. On ligand binding, forms a receptor complex consisting of two type II and two type I transmembrane serine/threonine kinases. Type II receptors phosphorylate and activate type I receptors which autophosphorylate, then bind and activate SMAD transcriptional regulators. May bind activin as well. This chain is Activin receptor type-1-like (Acvrl1), found in Mus musculus (Mouse).